The primary structure comprises 258 residues: Acyl-[acyl-carrier-protein]--UDP-N-acetylglucosamine O-acyltransferase (258 aa).

Belongs to the transferase hexapeptide repeat family. LpxA subfamily. Homotrimer.

The protein localises to the cytoplasm. It carries out the reaction a (3R)-hydroxyacyl-[ACP] + UDP-N-acetyl-alpha-D-glucosamine = a UDP-3-O-[(3R)-3-hydroxyacyl]-N-acetyl-alpha-D-glucosamine + holo-[ACP]. The protein operates within glycolipid biosynthesis; lipid IV(A) biosynthesis; lipid IV(A) from (3R)-3-hydroxytetradecanoyl-[acyl-carrier-protein] and UDP-N-acetyl-alpha-D-glucosamine: step 1/6. Functionally, involved in the biosynthesis of lipid A, a phosphorylated glycolipid that anchors the lipopolysaccharide to the outer membrane of the cell. The chain is Acyl-[acyl-carrier-protein]--UDP-N-acetylglucosamine O-acyltransferase from Pseudomonas putida (strain GB-1).